The sequence spans 281 residues: MKLAVITDSSADFAEKYKTYENLFVLDIPISIDGVDYDLQKISHEEWYDLMAEAQEVPKTSQPRVAELDRLLKDLEKQGYTHVLGLFLPAAISGFYQNIFYLQSEYEQMKVVFPETFITSSPLGYMVETVLDLAEAGVEFEEIIAKFEEQRDGDRAYMLVDDLHWLAKGGRLSNGAAVLGTLLNIKPVLTFSTEGKVEVFEKVRTVKKTMSRMKELLLKDAKDPLAYKVYVIHTRAEDRAQELYDYALSQGFDDVEIVTFGPVIATHLGLNTVAYGISPKK.

The 277-residue stretch at leucine 3–proline 279 folds into the DegV domain. Hexadecanoate contacts are provided by threonine 60 and serine 93.

May bind long-chain fatty acids, such as palmitate, and may play a role in lipid transport or fatty acid metabolism. The polypeptide is DegV domain-containing protein YqaC (yqaC) (Lactococcus lactis subsp. lactis (strain IL1403) (Streptococcus lactis)).